Here is a 390-residue protein sequence, read N- to C-terminus: Glutamyl-tRNA reductase (390 aa).

Residues 46–49 (TCNR), serine 96, 101–103 (EAQ), and glutamine 107 each bind substrate. The Nucleophile role is filled by cysteine 47. Residue 176–181 (GAGEMA) participates in NADP(+) binding.

It belongs to the glutamyl-tRNA reductase family. As to quaternary structure, homodimer.

It catalyses the reaction (S)-4-amino-5-oxopentanoate + tRNA(Glu) + NADP(+) = L-glutamyl-tRNA(Glu) + NADPH + H(+). It functions in the pathway porphyrin-containing compound metabolism; protoporphyrin-IX biosynthesis; 5-aminolevulinate from L-glutamyl-tRNA(Glu): step 1/2. Its function is as follows. Catalyzes the NADPH-dependent reduction of glutamyl-tRNA(Glu) to glutamate 1-semialdehyde (GSA). In Thermus thermophilus (strain ATCC 27634 / DSM 579 / HB8), this protein is Glutamyl-tRNA reductase.